A 159-amino-acid polypeptide reads, in one-letter code: 2-C-methyl-D-erythritol 2,4-cyclodiphosphate synthase (159 aa).

The a divalent metal cation site is built by aspartate 8 and histidine 10. 4-CDP-2-C-methyl-D-erythritol 2-phosphate contacts are provided by residues 8-10 and 34-35; these read DVH and HS. Residue histidine 42 coordinates a divalent metal cation. Residues 56–58, 61–65, 100–106, 132–135, phenylalanine 139, and arginine 142 each bind 4-CDP-2-C-methyl-D-erythritol 2-phosphate; these read DIG, FPDTD, AQAPRML, and TTTE.

It belongs to the IspF family. As to quaternary structure, homotrimer. The cofactor is a divalent metal cation.

It catalyses the reaction 4-CDP-2-C-methyl-D-erythritol 2-phosphate = 2-C-methyl-D-erythritol 2,4-cyclic diphosphate + CMP. The protein operates within isoprenoid biosynthesis; isopentenyl diphosphate biosynthesis via DXP pathway; isopentenyl diphosphate from 1-deoxy-D-xylulose 5-phosphate: step 4/6. Functionally, involved in the biosynthesis of isopentenyl diphosphate (IPP) and dimethylallyl diphosphate (DMAPP), two major building blocks of isoprenoid compounds. Catalyzes the conversion of 4-diphosphocytidyl-2-C-methyl-D-erythritol 2-phosphate (CDP-ME2P) to 2-C-methyl-D-erythritol 2,4-cyclodiphosphate (ME-CPP) with a corresponding release of cytidine 5-monophosphate (CMP). This is 2-C-methyl-D-erythritol 2,4-cyclodiphosphate synthase from Escherichia coli O6:K15:H31 (strain 536 / UPEC).